A 201-amino-acid polypeptide reads, in one-letter code: 3-isopropylmalate dehydratase small subunit (201 aa).

Belongs to the LeuD family. LeuD type 1 subfamily. As to quaternary structure, heterodimer of LeuC and LeuD.

The enzyme catalyses (2R,3S)-3-isopropylmalate = (2S)-2-isopropylmalate. Its pathway is amino-acid biosynthesis; L-leucine biosynthesis; L-leucine from 3-methyl-2-oxobutanoate: step 2/4. Functionally, catalyzes the isomerization between 2-isopropylmalate and 3-isopropylmalate, via the formation of 2-isopropylmaleate. In Methylorubrum populi (strain ATCC BAA-705 / NCIMB 13946 / BJ001) (Methylobacterium populi), this protein is 3-isopropylmalate dehydratase small subunit.